Consider the following 282-residue polypeptide: ATP phosphoribosyltransferase (282 aa).

The protein belongs to the ATP phosphoribosyltransferase family. Long subfamily. The cofactor is Mg(2+).

Its subcellular location is the cytoplasm. The catalysed reaction is 1-(5-phospho-beta-D-ribosyl)-ATP + diphosphate = 5-phospho-alpha-D-ribose 1-diphosphate + ATP. Its pathway is amino-acid biosynthesis; L-histidine biosynthesis; L-histidine from 5-phospho-alpha-D-ribose 1-diphosphate: step 1/9. Feedback inhibited by histidine. Its function is as follows. Catalyzes the condensation of ATP and 5-phosphoribose 1-diphosphate to form N'-(5'-phosphoribosyl)-ATP (PR-ATP). Has a crucial role in the pathway because the rate of histidine biosynthesis seems to be controlled primarily by regulation of HisG enzymatic activity. This Pyrobaculum islandicum (strain DSM 4184 / JCM 9189 / GEO3) protein is ATP phosphoribosyltransferase.